Reading from the N-terminus, the 359-residue chain is Homoserine dehydrogenase (359 aa).

The NAD(+) site is built by Ala13, Val15, Val16, and Ala41. Position 16 (Val16) interacts with NADP(+). Val16 is an NADPH binding site. Lys60, Thr93, Ser94, and Lys117 together coordinate NADPH. An NAD(+)-binding site is contributed by Thr93. Thr93 contacts NADP(+). Lys117 provides a ligand contact to NADP(+). Na(+) contacts are provided by Glu143, Val146, Ala148, and Leu150. NADP(+) contacts are provided by Gly205 and Glu208. Positions 208 and 219 each coordinate L-homoserine. Residue Lys223 is the Proton donor of the active site. Lys290 is covalently cross-linked (Glycyl lysine isopeptide (Lys-Gly) (interchain with G-Cter in ubiquitin)). Position 340 (Gly340) interacts with NAD(+). Residue Gly340 coordinates NADP(+). Gly340 provides a ligand contact to NADPH.

This sequence belongs to the homoserine dehydrogenase family. In terms of assembly, homodimer. It depends on a metal cation as a cofactor.

The catalysed reaction is L-homoserine + NADP(+) = L-aspartate 4-semialdehyde + NADPH + H(+). The enzyme catalyses L-homoserine + NAD(+) = L-aspartate 4-semialdehyde + NADH + H(+). The protein operates within amino-acid biosynthesis; L-methionine biosynthesis via de novo pathway; L-homoserine from L-aspartate: step 3/3. It functions in the pathway amino-acid biosynthesis; L-threonine biosynthesis; L-threonine from L-aspartate: step 3/5. Catalyzes the conversion of L-aspartate-beta-semialdehyde (L-Asa) to L-homoserine (L-Hse), the third step in the biosynthesis of amino acids that derive from aspartate (the aspartate family of amino acids), including methioinine and threonine, the latter of which is a precursor to isoleucine; production of homoserine leads to a branch-point in the pathway as it can either be O-phosphorylated for processing to threonine, or O-acylated for processing to methionine. This Saccharomyces cerevisiae (strain ATCC 204508 / S288c) (Baker's yeast) protein is Homoserine dehydrogenase (HOM6).